Here is a 274-residue protein sequence, read N- to C-terminus: Thiazole synthase (274 aa).

Lys115 serves as the catalytic Schiff-base intermediate with DXP. 1-deoxy-D-xylulose 5-phosphate contacts are provided by residues Gly176, 202-203, and 224-225; these read AG and NS.

The protein belongs to the ThiG family. As to quaternary structure, homotetramer. Forms heterodimers with either ThiH or ThiS.

The protein localises to the cytoplasm. It carries out the reaction [ThiS sulfur-carrier protein]-C-terminal-Gly-aminoethanethioate + 2-iminoacetate + 1-deoxy-D-xylulose 5-phosphate = [ThiS sulfur-carrier protein]-C-terminal Gly-Gly + 2-[(2R,5Z)-2-carboxy-4-methylthiazol-5(2H)-ylidene]ethyl phosphate + 2 H2O + H(+). Its pathway is cofactor biosynthesis; thiamine diphosphate biosynthesis. Its function is as follows. Catalyzes the rearrangement of 1-deoxy-D-xylulose 5-phosphate (DXP) to produce the thiazole phosphate moiety of thiamine. Sulfur is provided by the thiocarboxylate moiety of the carrier protein ThiS. In vitro, sulfur can be provided by H(2)S. This Psychrobacter arcticus (strain DSM 17307 / VKM B-2377 / 273-4) protein is Thiazole synthase.